A 302-amino-acid chain; its full sequence is Cell division protein FtsQ (302 aa).

Residues 1-43 lie on the Cytoplasmic side of the membrane; that stretch reads MRPVDKKPVDRKIERETRYLRRDPAPSRWSYRYQRLMLTPAFR. The chain crosses the membrane as a helical span at residues 44-64; it reads AGVRLGTPVIIIALAVAVVFG. Residues 65–302 lie on the Periplasmic side of the membrane; that stretch reads RADSRDWIMG…SMPGRSAGRG (238 aa). The POTRA domain occupies 89-156; sequence FMVGSFAITG…GVLQIVIEER (68 aa).

It belongs to the FtsQ/DivIB family. FtsQ subfamily.

It is found in the cell inner membrane. In terms of biological role, essential cell division protein. This is Cell division protein FtsQ from Ketogulonicigenium vulgare (strain Y25).